A 183-amino-acid polypeptide reads, in one-letter code: ATP synthase subunit delta (183 aa).

Belongs to the ATPase delta chain family. As to quaternary structure, F-type ATPases have 2 components, F(1) - the catalytic core - and F(0) - the membrane proton channel. F(1) has five subunits: alpha(3), beta(3), gamma(1), delta(1), epsilon(1). F(0) has three main subunits: a(1), b(2) and c(10-14). The alpha and beta chains form an alternating ring which encloses part of the gamma chain. F(1) is attached to F(0) by a central stalk formed by the gamma and epsilon chains, while a peripheral stalk is formed by the delta and b chains.

It localises to the cell inner membrane. Functionally, f(1)F(0) ATP synthase produces ATP from ADP in the presence of a proton or sodium gradient. F-type ATPases consist of two structural domains, F(1) containing the extramembraneous catalytic core and F(0) containing the membrane proton channel, linked together by a central stalk and a peripheral stalk. During catalysis, ATP synthesis in the catalytic domain of F(1) is coupled via a rotary mechanism of the central stalk subunits to proton translocation. Its function is as follows. This protein is part of the stalk that links CF(0) to CF(1). It either transmits conformational changes from CF(0) to CF(1) or is implicated in proton conduction. The polypeptide is ATP synthase subunit delta (Thermotoga neapolitana (strain ATCC 49049 / DSM 4359 / NBRC 107923 / NS-E)).